A 660-amino-acid polypeptide reads, in one-letter code: Translation factor GUF1 homolog, mitochondrial (660 aa).

Positions 62–243 (EKIRNFSIIA…TIIEKIPPPT (182 aa)) constitute a tr-type G domain. Residues 71 to 78 (AHIDHGKS), 136 to 140 (DTPGH), and 190 to 193 (NKID) contribute to the GTP site.

It belongs to the TRAFAC class translation factor GTPase superfamily. Classic translation factor GTPase family. LepA subfamily.

It localises to the mitochondrion inner membrane. It carries out the reaction GTP + H2O = GDP + phosphate + H(+). In terms of biological role, promotes mitochondrial protein synthesis. May act as a fidelity factor of the translation reaction, by catalyzing a one-codon backward translocation of tRNAs on improperly translocated ribosomes. Binds to mitochondrial ribosomes in a GTP-dependent manner. The polypeptide is Translation factor GUF1 homolog, mitochondrial (Trichoplax adhaerens (Trichoplax reptans)).